The following is a 266-amino-acid chain: Putative carbamate hydrolase RutD (266 aa).

Positions 14–115 (PVVVLISGLG…TMLVSVNGWL (102 aa)) constitute an AB hydrolase-1 domain.

This sequence belongs to the AB hydrolase superfamily. Hydrolase RutD family.

It catalyses the reaction carbamate + 2 H(+) = NH4(+) + CO2. Involved in pyrimidine catabolism. May facilitate the hydrolysis of carbamate, a reaction that can also occur spontaneously. The protein is Putative carbamate hydrolase RutD of Shigella flexneri serotype 5b (strain 8401).